Reading from the N-terminus, the 452-residue chain is Glutamyl-tRNA(Gln) amidotransferase subunit A (452 aa).

Active-site charge relay system residues include K56 and S131. The active-site Acyl-ester intermediate is the S155.

This sequence belongs to the amidase family. GatA subfamily. Heterotrimer of A, B and C subunits.

It catalyses the reaction L-glutamyl-tRNA(Gln) + L-glutamine + ATP + H2O = L-glutaminyl-tRNA(Gln) + L-glutamate + ADP + phosphate + H(+). In terms of biological role, allows the formation of correctly charged Gln-tRNA(Gln) through the transamidation of misacylated Glu-tRNA(Gln) in organisms which lack glutaminyl-tRNA synthetase. The reaction takes place in the presence of glutamine and ATP through an activated gamma-phospho-Glu-tRNA(Gln). The protein is Glutamyl-tRNA(Gln) amidotransferase subunit A of Campylobacter hominis (strain ATCC BAA-381 / DSM 21671 / CCUG 45161 / LMG 19568 / NCTC 13146 / CH001A).